A 157-amino-acid chain; its full sequence is Putative dehydration-responsive element-binding protein 2H (157 aa).

The short motif at 5 to 21 (RKSRGTRDVAEILRKWR) is the Nuclear localization signal element. The segment at 29 to 57 (ADSCIDGGGSKPIRKAPPKRSRKGCMKGK) is disordered. Residues 40-54 (PIRKAPPKRSRKGCM) show a composition bias toward basic residues. A DNA-binding region (AP2/ERF) is located at residues 66-123 (DYTGVRQRTWGKWVAEIREPGRGAKLWLGTFSSSYEAALAYDEASKAIYGQSARLNLP).

It belongs to the AP2/ERF transcription factor family. ERF subfamily.

It localises to the nucleus. Putative transcriptional activator that binds specifically to the DNA sequence 5'-[AG]CCGAC-3'. The protein is Putative dehydration-responsive element-binding protein 2H (DREB2H) of Arabidopsis thaliana (Mouse-ear cress).